A 364-amino-acid chain; its full sequence is 3-dehydroquinate synthase (364 aa).

Residues 73 to 78 (DGEQNK), 107 to 111 (GVIGD), 131 to 132 (TT), Lys144, Lys153, and 171 to 174 (CLCT) contribute to the NAD(+) site. Zn(2+) is bound by residues Glu186, His249, and His266.

It belongs to the sugar phosphate cyclases superfamily. Dehydroquinate synthase family. Requires NAD(+) as cofactor. It depends on Co(2+) as a cofactor. Zn(2+) is required as a cofactor.

It is found in the cytoplasm. The catalysed reaction is 7-phospho-2-dehydro-3-deoxy-D-arabino-heptonate = 3-dehydroquinate + phosphate. It functions in the pathway metabolic intermediate biosynthesis; chorismate biosynthesis; chorismate from D-erythrose 4-phosphate and phosphoenolpyruvate: step 2/7. In terms of biological role, catalyzes the conversion of 3-deoxy-D-arabino-heptulosonate 7-phosphate (DAHP) to dehydroquinate (DHQ). The chain is 3-dehydroquinate synthase from Blochmanniella floridana.